The sequence spans 181 residues: Alkyl hydroperoxide reductase AhpD (181 aa).

The active-site Proton donor is C130. C130 and C133 form a disulfide bridge. C133 acts as the Cysteine sulfenic acid (-SOH) intermediate in catalysis.

It belongs to the AhpD family.

It catalyses the reaction N(6)-[(R)-dihydrolipoyl]-L-lysyl-[lipoyl-carrier protein] + a hydroperoxide = N(6)-[(R)-lipoyl]-L-lysyl-[lipoyl-carrier protein] + an alcohol + H2O. In terms of biological role, antioxidant protein with alkyl hydroperoxidase activity. Required for the reduction of the AhpC active site cysteine residues and for the regeneration of the AhpC enzyme activity. The protein is Alkyl hydroperoxide reductase AhpD of Gluconacetobacter diazotrophicus (strain ATCC 49037 / DSM 5601 / CCUG 37298 / CIP 103539 / LMG 7603 / PAl5).